Here is a 395-residue protein sequence, read N- to C-terminus: NAD(P)H-quinone oxidoreductase subunit H (395 aa).

This sequence belongs to the complex I 49 kDa subunit family. In terms of assembly, NDH-1 can be composed of about 15 different subunits; different subcomplexes with different compositions have been identified which probably have different functions.

The protein resides in the cellular thylakoid membrane. The enzyme catalyses a plastoquinone + NADH + (n+1) H(+)(in) = a plastoquinol + NAD(+) + n H(+)(out). It carries out the reaction a plastoquinone + NADPH + (n+1) H(+)(in) = a plastoquinol + NADP(+) + n H(+)(out). In terms of biological role, NDH-1 shuttles electrons from an unknown electron donor, via FMN and iron-sulfur (Fe-S) centers, to quinones in the respiratory and/or the photosynthetic chain. The immediate electron acceptor for the enzyme in this species is believed to be plastoquinone. Couples the redox reaction to proton translocation, and thus conserves the redox energy in a proton gradient. Cyanobacterial NDH-1 also plays a role in inorganic carbon-concentration. In Prochlorococcus marinus (strain MIT 9515), this protein is NAD(P)H-quinone oxidoreductase subunit H.